We begin with the raw amino-acid sequence, 312 residues long: Cytochrome f (312 aa).

The N-terminal stretch at methionine 1–alanine 28 is a signal peptide. Residues tyrosine 29, cysteine 49, cysteine 52, and histidine 53 each contribute to the heme site. The helical transmembrane segment at valine 278–lysine 298 threads the bilayer.

Belongs to the cytochrome f family. In terms of assembly, the 4 large subunits of the cytochrome b6-f complex are cytochrome b6, subunit IV (17 kDa polypeptide, petD), cytochrome f and the Rieske protein, while the 4 small subunits are PetG, PetL, PetM and PetN. The complex functions as a dimer. The cofactor is heme.

It localises to the plastid. Its subcellular location is the chloroplast thylakoid membrane. In terms of biological role, component of the cytochrome b6-f complex, which mediates electron transfer between photosystem II (PSII) and photosystem I (PSI), cyclic electron flow around PSI, and state transitions. In Emiliania huxleyi (Coccolithophore), this protein is Cytochrome f.